The primary structure comprises 229 residues: Ribonuclease HII (229 aa).

Positions 34 to 223 constitute an RNase H type-2 domain; that stretch reads WPVAGADEAG…LRKSEDGPEM (190 aa). The a divalent metal cation site is built by aspartate 40, glutamate 41, and aspartate 131. Residues 209–229 are disordered; that stretch reads MSFRPLRKSEDGPEMDELIPE. Residues 220 to 229 are compositionally biased toward acidic residues; the sequence is GPEMDELIPE.

It belongs to the RNase HII family. It depends on Mn(2+) as a cofactor. Mg(2+) is required as a cofactor.

The protein resides in the cytoplasm. The catalysed reaction is Endonucleolytic cleavage to 5'-phosphomonoester.. Its function is as follows. Endonuclease that specifically degrades the RNA of RNA-DNA hybrids. The protein is Ribonuclease HII of Rhizobium etli (strain CIAT 652).